The primary structure comprises 341 residues: Protein pelota homolog (341 aa).

This sequence belongs to the eukaryotic release factor 1 family. Pelota subfamily. As to quaternary structure, monomer. A divalent metal cation is required as a cofactor.

It is found in the cytoplasm. Its function is as follows. May function in recognizing stalled ribosomes, interact with stem-loop structures in stalled mRNA molecules, and effect endonucleolytic cleavage of the mRNA. May play a role in the release non-functional ribosomes and degradation of damaged mRNAs. Has endoribonuclease activity. This is Protein pelota homolog from Sulfurisphaera tokodaii (strain DSM 16993 / JCM 10545 / NBRC 100140 / 7) (Sulfolobus tokodaii).